A 129-amino-acid polypeptide reads, in one-letter code: uncharacterized protein (129 aa).

The chain crosses the membrane as a helical span at residues 8–24; that stretch reads YLILFITIIAICSLFRI.

The protein localises to the membrane. This is an uncharacterized protein from Rickettsia prowazekii (strain Madrid E).